The following is a 208-amino-acid chain: UPF0637 protein BCAH820_3975 (208 aa).

Belongs to the UPF0637 family.

The polypeptide is UPF0637 protein BCAH820_3975 (Bacillus cereus (strain AH820)).